The primary structure comprises 42 residues: YKQCHKKGGHCFPKEKICIPPSSDFGKMDCRWRWKCCKKGSG.

Disulfide bonds link cysteine 4–cysteine 36, cysteine 11–cysteine 30, and cysteine 18–cysteine 37.

This sequence belongs to the crotamine-myotoxin family. As to quaternary structure, monomer. Expressed by the venom gland.

It localises to the secreted. Cationic peptide that possesses multiple functions. It acts as a cell-penetrating peptide (CPP), and as a potent voltage-gated potassium channel (Kv) inhibitor, it induces severe muscle necrosis by a non-enzymatic mechanism and exhibits antimicrobial activities. It also elicits a short-lasting hyperextension of the hind limb. It does not cause observable tissue damage (whereas the whole venom causes severe myonecrosis accompanied by edema and hemorrhage). The chain is Crotamine Ile-19 from Crotalus durissus ruruima (South American rattlesnake).